Here is a 94-residue protein sequence, read N- to C-terminus: Putative pterin-4-alpha-carbinolamine dehydratase (94 aa).

Belongs to the pterin-4-alpha-carbinolamine dehydratase family.

It catalyses the reaction (4aS,6R)-4a-hydroxy-L-erythro-5,6,7,8-tetrahydrobiopterin = (6R)-L-erythro-6,7-dihydrobiopterin + H2O. This is Putative pterin-4-alpha-carbinolamine dehydratase from Chloroflexus aggregans (strain MD-66 / DSM 9485).